The sequence spans 208 residues: MGKKRSASSSRWLNEHFKDPFVQKAHKQKLRSRAYFKLDEIQQSDRLFKPGMTVVDLGAAPGGWSQYVVTQIGDKGRIIACDILDMDPIVGVDFLQGDFRDENVLAALLDRVGEDQVDVVMSDMAPNFSGMPSVDIPRAMYLVELALDMCKQVLAKKGSFVVKVFQGEGFDEYLREIRSLFTTVKVRKPEASRDRSREVYIVATGYRG.

S-adenosyl-L-methionine contacts are provided by Gly-62, Trp-64, Asp-82, Asp-98, and Asp-123. The active-site Proton acceptor is the Lys-163.

The protein belongs to the class I-like SAM-binding methyltransferase superfamily. RNA methyltransferase RlmE family.

The protein resides in the cytoplasm. The enzyme catalyses uridine(2552) in 23S rRNA + S-adenosyl-L-methionine = 2'-O-methyluridine(2552) in 23S rRNA + S-adenosyl-L-homocysteine + H(+). Its function is as follows. Specifically methylates the uridine in position 2552 of 23S rRNA at the 2'-O position of the ribose in the fully assembled 50S ribosomal subunit. The sequence is that of Ribosomal RNA large subunit methyltransferase E from Mannheimia succiniciproducens (strain KCTC 0769BP / MBEL55E).